We begin with the raw amino-acid sequence, 456 residues long: F-box/FBD/LRR-repeat protein At3g52680 (456 aa).

An F-box domain is found at 20–73 (KDRISELPDGLLLKILSSLPTNIVVATSVLSKQWRSLWKLVPNLEFDSDDYESE). LRR repeat units follow at residues 74 to 100 (HYTF…RLKF), 102 to 127 (NFNP…VLDF), 152 to 179 (TLKL…HLEF), 180 to 205 (VRYK…RLYR), 225 to 252 (TIHD…LIEE), 270 to 295 (IAEV…LLNL), and 318 to 344 (TREA…KLTD). Residues 358–409 (KWNEPKDVPECLLSQLETFVWRRFDWGREEEKEIATYILKNGRRLKKATFST) enclose the FBD domain.

The chain is F-box/FBD/LRR-repeat protein At3g52680 from Arabidopsis thaliana (Mouse-ear cress).